A 499-amino-acid polypeptide reads, in one-letter code: Salviol synthase (499 aa).

Residues 4–24 traverse the membrane as a helical segment; the sequence is HIPSLVLCISFFIFFKIVSKL. Heme is bound at residue cysteine 436.

The protein belongs to the cytochrome P450 family. Heme serves as cofactor. As to expression, expressed in leaf glandular trichomes.

It localises to the membrane. The enzyme catalyses ferruginol + reduced [NADPH--hemoprotein reductase] + O2 = salviol + oxidized [NADPH--hemoprotein reductase] + H2O + H(+). It participates in secondary metabolite biosynthesis; terpenoid biosynthesis. Functionally, monooxygenase involved in the biosynthesis of labdane-related diterpenes natural products. Catalyzes the oxidation of ferruginol to produce salviol. Salviol is an intermediate in the biosynthesis of carnosate, a potent antioxidant. This Salvia pomifera (Apple sage) protein is Salviol synthase.